Consider the following 177-residue polypeptide: Coatomer subunit zeta-3 (177 aa).

Belongs to the adaptor complexes small subunit family. In terms of assembly, oligomeric complex that consists of at least the alpha, beta, beta', gamma, delta, epsilon and zeta subunits.

It is found in the cytoplasm. The protein localises to the golgi apparatus membrane. The protein resides in the cytoplasmic vesicle. It localises to the COPI-coated vesicle membrane. In terms of biological role, the coatomer is a cytosolic protein complex that binds to dilysine motifs and reversibly associates with Golgi non-clathrin-coated vesicles, which further mediate biosynthetic protein transport from the ER, via the Golgi up to the trans Golgi network. Coatomer complex is required for budding from Golgi membranes, and is essential for the retrograde Golgi-to-ER transport of dilysine-tagged proteins. The zeta subunit may be involved in regulating the coat assembly and, hence, the rate of biosynthetic protein transport due to its association-dissociation properties with the coatomer complex. In Oryza sativa subsp. japonica (Rice), this protein is Coatomer subunit zeta-3.